We begin with the raw amino-acid sequence, 987 residues long: Nuclear matrix constituent protein 1b (987 aa).

The segment at 1–25 (MASPRSAGGVGGGGGGGGGSGGAAA) is disordered. The segment covering 8–24 (GGVGGGGGGGGGSGGAA) has biased composition (gly residues). 2 coiled-coil regions span residues 403 to 545 (LAEL…ERRA) and 594 to 717 (LSKI…DREA). 2 stretches are compositionally biased toward basic and acidic residues: residues 752 to 764 (SDIN…HDNS) and 898 to 908 (CKEHEYGDKGP). Disordered stretches follow at residues 752–775 (SDIN…FGRK) and 887–987 (HDEA…FLIT). Residues 944-954 (ATVSATETSNV) are compositionally biased toward polar residues. Acidic residues predominate over residues 956–973 (GPEDNNDSDEEDEEEEEE).

Belongs to the CRWN family. In terms of assembly, interacts with SWI3C.

It localises to the nucleus matrix. It is found in the nucleus lamina. Its function is as follows. Architectural component of nuclear structure that plays different roles in controlling nuclear size and morphology. Involved in the modification of chromatin accessibility by interacting with SWI3C, a component of the chromatin-remodeling complex, to thus reduce the suppression effect of the complex. Acts as positive regulator of drought resistance and modulates root growth. Positively regulates the expression of genes related to root growth and drought resistance. The chain is Nuclear matrix constituent protein 1b from Oryza sativa subsp. japonica (Rice).